The primary structure comprises 73 residues: Methionyl-tRNA formyltransferase (73 aa).

It belongs to the Fmt family.

The catalysed reaction is L-methionyl-tRNA(fMet) + (6R)-10-formyltetrahydrofolate = N-formyl-L-methionyl-tRNA(fMet) + (6S)-5,6,7,8-tetrahydrofolate + H(+). Functionally, attaches a formyl group to the free amino group of methionyl-tRNA(fMet). The formyl group appears to play a dual role in the initiator identity of N-formylmethionyl-tRNA by promoting its recognition by IF2 and preventing the misappropriation of this tRNA by the elongation apparatus. The protein is Methionyl-tRNA formyltransferase (fmt) of Rickettsia rickettsii.